A 113-amino-acid polypeptide reads, in one-letter code: Urease subunit beta (113 aa).

It belongs to the urease beta subunit family. Heterotrimer of UreA (gamma), UreB (beta) and UreC (alpha) subunits. Three heterotrimers associate to form the active enzyme.

It is found in the cytoplasm. The catalysed reaction is urea + 2 H2O + H(+) = hydrogencarbonate + 2 NH4(+). It functions in the pathway nitrogen metabolism; urea degradation; CO(2) and NH(3) from urea (urease route): step 1/1. The polypeptide is Urease subunit beta (Nitrosospira multiformis (strain ATCC 25196 / NCIMB 11849 / C 71)).